The chain runs to 448 residues: MRILPEPRGSVPCLLLLVSVLLSATLSLARVVEVVGYAESKIKTPHAFSGLRVTIDCKVNKGHFVTKGSGNIDDKGKFGLNIPHDIVSDNGALKEECYAQLHSAAGTPCPAHDGLESTKIVFLSKSGDKHILGLKQNLKFSPEICVSKFFWPMPKLPPFKGFDHPFPLPPPLELPPFLKKPCPPKYSPPVEVPPPVPVYEPPPKKEIPPPVPVYDPPPKKEVPPPVPVYKPPPKVELPPPIPKKPCPPKPPKIEHPPPVPVYKPPPKIEKPPPVPVYKPPPKIEHPPPVPVHKLPKKPCPPKKVDPPPVPVHKPPTKKPCPPKKVDPPPVPVHKPPPKIVIPPPKIEHPPPVPVYKPPPKIEHPPIYIPPIVKKPCPPPVPIYKPPVVIPKKPCPPPVPVYKPPVVVIPKKPCPPLPQLPPLPKFPPLPPKYIHHPKFGKWPPLPPHP.

A signal peptide spans 1–29; the sequence is MRILPEPRGSVPCLLLLVSVLLSATLSLA. Repeat copies occupy residues 152 to 156, 157 to 161, 165 to 169, 170 to 174, 175 to 179, 183 to 187, 188 to 193, 194 to 198, 201 to 205, 208 to 212, 216 to 220, 222 to 226, 227 to 231, 232 to 236, 238 to 242, 245 to 249, 250 to 254, 256 to 259, 260 to 264, 265 to 270, 271 to 278, 279 to 284, 286 to 294, 295 to 299, 300 to 304, 306 to 311, 314 to 320, 321 to 327, 328 to 334, 335 to 341, 342 to 348, 349 to 356, 357 to 363, 364 to 368, 369 to 374, 378 to 384, 385 to 389, 390 to 394, 395 to 402, 403 to 407, 409 to 413, 414 to 419, 420 to 424, 425 to 429, 430 to 434, and 442 to 446. A 46 X 5 AA approximate repeats region spans residues 152 to 446; sequence PMPKLPPFKG…KFGKWPPLPP (295 aa). Pro residues predominate over residues 240-290; that stretch reads PIPKKPCPPKPPKIEHPPPVPVYKPPPKIEKPPPVPVYKPPPKIEHPPPVP. The disordered stretch occupies residues 240–345; sequence PIPKKPCPPK…PPKIVIPPPK (106 aa). Pro residues-rich tracts occupy residues 306 to 319 and 327 to 345; these read PPPVPVHKPPTKKP and PPPVPVHKPPPKIVIPPPK.

It belongs to the plant proline-rich protein superfamily. Mostly expressed in aerial organs, particularly in expanding leaves, stems, flowers, and siliques. Also present in stipules.

It is found in the secreted. The protein resides in the cell wall. In Arabidopsis thaliana (Mouse-ear cress), this protein is Proline-rich protein 4 (PRP4).